The following is a 375-amino-acid chain: Growth/differentiation factor 8 (375 aa).

Residues 1–23 form the signal peptide; sequence MQKLQLCVYIYLFMLIVAGPVDL. The propeptide occupies 24-266; it reads NENSEQKENV…VTDTPKRSRR (243 aa). N-linked (GlcNAc...) asparagine glycosylation occurs at Asn-71. 4 disulfide bridges follow: Cys-272/Cys-282, Cys-281/Cys-340, Cys-309/Cys-372, and Cys-313/Cys-374.

The protein belongs to the TGF-beta family. In terms of assembly, homodimer; disulfide-linked. Interacts with WFIKKN2, leading to inhibit its activity. Interacts with FSTL3. In terms of processing, synthesized as large precursor molecule that undergoes proteolytic cleavage to generate an N-terminal propeptide and a disulfide linked C-terminal dimer, which is the biologically active molecule. The circulating form consists of a latent complex of the C-terminal dimer and other proteins, including its propeptide, which maintain the C-terminal dimer in a latent, inactive state. Ligand activation requires additional cleavage of the prodomain by a tolloid-like metalloproteinase.

Its subcellular location is the secreted. In terms of biological role, acts specifically as a negative regulator of skeletal muscle growth. This chain is Growth/differentiation factor 8 (MSTN), found in Pan paniscus (Pygmy chimpanzee).